A 418-amino-acid chain; its full sequence is Type II methyltransferase M.MspI (418 aa).

In terms of domain architecture, SAM-dependent MTase C5-type spans 105–404 (FKFIDLFSGI…EQISLALKTV (300 aa)). The active site involves C174.

Belongs to the class I-like SAM-binding methyltransferase superfamily. C5-methyltransferase family.

It catalyses the reaction a 2'-deoxycytidine in DNA + S-adenosyl-L-methionine = a 5-methyl-2'-deoxycytidine in DNA + S-adenosyl-L-homocysteine + H(+). Its function is as follows. A methylase, recognizes the double-stranded sequence 5'-CCGG-3', methylates C-1 on both strands, and protects the DNA from cleavage by the MspI endonuclease. This Moraxella sp protein is Type II methyltransferase M.MspI (mspIM).